A 281-amino-acid polypeptide reads, in one-letter code: Pantothenate synthetase (281 aa).

30–37 (MGYYHAGH) contributes to the ATP binding site. The active-site Proton donor is the His37. A (R)-pantoate-binding site is contributed by Gln61. Residue Gln61 participates in beta-alanine binding. 147–150 (GEKD) contributes to the ATP binding site. Gln153 contacts (R)-pantoate. Residues Val176 and 184–187 (MSSR) each bind ATP.

The protein belongs to the pantothenate synthetase family. In terms of assembly, homodimer.

Its subcellular location is the cytoplasm. It catalyses the reaction (R)-pantoate + beta-alanine + ATP = (R)-pantothenate + AMP + diphosphate + H(+). Its pathway is cofactor biosynthesis; (R)-pantothenate biosynthesis; (R)-pantothenate from (R)-pantoate and beta-alanine: step 1/1. Catalyzes the condensation of pantoate with beta-alanine in an ATP-dependent reaction via a pantoyl-adenylate intermediate. In Oleidesulfovibrio alaskensis (strain ATCC BAA-1058 / DSM 17464 / G20) (Desulfovibrio alaskensis), this protein is Pantothenate synthetase.